An 820-amino-acid chain; its full sequence is Trimethylamine-N-oxide reductase (820 aa).

The tat-type signal signal peptide spans 1 to 33; sequence MAITRRSFLKGVATTSAASIIGPSLLTSVSAQA. Ser-179 lines the Mo-bis(molybdopterin guanine dinucleotide) pocket.

Belongs to the prokaryotic molybdopterin-containing oxidoreductase family. The cofactor is Mo-bis(molybdopterin guanine dinucleotide). Predicted to be exported by the Tat system. The position of the signal peptide cleavage has not been experimentally proven.

Its subcellular location is the periplasm. The catalysed reaction is trimethylamine + 2 Fe(III)-[cytochrome c] + H2O = trimethylamine N-oxide + 2 Fe(II)-[cytochrome c] + 3 H(+). In terms of biological role, reduces trimethylamine-N-oxide (TMAO) into trimethylamine; an anaerobic reaction coupled to energy-yielding reactions. This chain is Trimethylamine-N-oxide reductase (torA), found in Vibrio cholerae serotype O1 (strain ATCC 39315 / El Tor Inaba N16961).